Reading from the N-terminus, the 93-residue chain is Small ribosomal subunit protein uS19c (93 aa).

The protein belongs to the universal ribosomal protein uS19 family.

The protein resides in the plastid. It is found in the chloroplast. In terms of biological role, protein S19 forms a complex with S13 that binds strongly to the 16S ribosomal RNA. This chain is Small ribosomal subunit protein uS19c, found in Oryza nivara (Indian wild rice).